Reading from the N-terminus, the 520-residue chain is Mitogen-activated protein kinase kinase 3 (520 aa).

Ser-69 carries the phosphoserine modification. A Protein kinase domain is found at 83–339 (MRVFGAIGSG…ADQLLSHPFI (257 aa)). ATP-binding positions include 89-97 (IGSGASSVV) and Lys-112. Asp-207 functions as the Proton acceptor in the catalytic mechanism. Residue Ser-235 is modified to Phosphoserine. A phosphothreonine mark is found at Thr-241 and Thr-245. Positions 366-516 (LADMLTIHYY…YFLAKQELYI (151 aa)) constitute an NTF2 domain.

This sequence belongs to the protein kinase superfamily. STE Ser/Thr protein kinase family. MAP kinase kinase subfamily. Interacts with MPK1, MPK2 and MPK7. Interacts with P.syringae type III effector HopF2. Interacts with MPK14. Binds to MAPKKK17 and MAPKKK18. Binds to MAPKKK20. Phosphorylation at Ser-235 and Thr-241 by MAP kinase kinase kinases positively regulates kinase activity. Phosphorylated by MAPKKK20. In terms of tissue distribution, mostly expressed in leaves, and, to a lower extent, in roots, seedlings, flower buds, flowers and siliques.

It is found in the nucleus. It localises to the cytoplasm. The catalysed reaction is L-seryl-[protein] + ATP = O-phospho-L-seryl-[protein] + ADP + H(+). The enzyme catalyses L-threonyl-[protein] + ATP = O-phospho-L-threonyl-[protein] + ADP + H(+). It carries out the reaction L-tyrosyl-[protein] + ATP = O-phospho-L-tyrosyl-[protein] + ADP + H(+). Functionally, MKK3-MPK6 module plays an important role in the jasmonate signal transduction pathway through the negative regulation of MYC2/JIN1 expression. Activates by phosphorylation the downstream MPK6, MPK7 and MPK8. MKK3-MPK7 module acts as a positive regulator of PR1 gene expression. MKK3-MPK8 module negatively regulates ROS accumulation through controlling expression of the RBOHD gene. Component of the abscisic acid (ABA) signaling pathway that may act as ABA signal transducer in the context of abiotic stresses. Activator of the C group MAP kinases. Activates MPK7 in response to ABA. Mitogen-activated protein kinase (MAPK) that is specifically regulated by MAPKKK20 and mediates signaling that regulates cortical microtubule functions. The chain is Mitogen-activated protein kinase kinase 3 from Arabidopsis thaliana (Mouse-ear cress).